Consider the following 92-residue polypeptide: Evasin P675 (92 aa).

An N-terminal signal peptide occupies residues 1–24; it reads MEVKTFAFLQIAVIIALGLHLAPA. Cystine bridges form between Cys44-Cys63, Cys48-Cys65, and Cys59-Cys76. A glycan (N-linked (GlcNAc...) asparagine) is linked at Asn47. N-linked (GlcNAc...) asparagine glycosylation occurs at Asn70.

It is found in the secreted. In terms of biological role, salivary chemokine-binding protein which binds to host chemokines CXCL1, CXCL2, CXCL3, CXCL4, CXCL5, CXCL6, CXCL10, CXCL11 and CXCL13. The protein is Evasin P675 of Ixodes ricinus (Common tick).